A 181-amino-acid chain; its full sequence is Cyclic phosphodiesterase (181 aa).

Catalysis depends on H42, which acts as the Proton donor/acceptor. T44 serves as a coordination point for substrate. Cystine bridges form between C64-C177 and C104-C110. The Proton donor/acceptor role is filled by H119. 2 residues coordinate substrate: S121 and Y124.

Belongs to the 2H phosphoesterase superfamily. CPD1 family. In terms of tissue distribution, expressed in leaves, stems, roots, floral buds and germinating seeds.

It is found in the cytoplasm. The enzyme catalyses ADP-alpha-D-ribose 1'',2''-cyclic phosphate + H2O = ADP-alpha-D-ribose 1''-phosphate + H(+). The catalysed reaction is 2',3'-cyclophospho-AMP + H2O = adenosine 2'-phosphate + H(+). It catalyses the reaction 2',3'-cyclophospho-GMP + H2O = guanosine 2'-phosphate + H(+). It carries out the reaction 2',3'-cyclophospho-UMP + H2O = uridine 2'-phosphate + H(+). The enzyme catalyses 2',3'-cyclophospho-CMP + H2O = cytidine 2'-phosphate + H(+). Inhibited by Cu(2+) and Zn(2+) at 0.5 mM by 93 and 87% respectively. Not inhibited by Ca(2+), Mg(2+), Co(2+), Ni(2+), and EDTA at 0.5 mM. Hydrolyzes ADP-ribose 1'',2''-cyclic phosphate (Appr&gt;1) that is produced during tRNA splicing into ADP-ribose 1''-phosphate (Appr-1''p). Also acts on nucleoside 2',3'-cyclic phosphates. In Arabidopsis thaliana (Mouse-ear cress), this protein is Cyclic phosphodiesterase.